Reading from the N-terminus, the 317-residue chain is Olfactory receptor 2T27 (317 aa).

The Extracellular portion of the chain corresponds to 1-22 (MEQSNYSVYADFILLGLFSNAR). A glycan (N-linked (GlcNAc...) asparagine) is linked at Asn-5. A helical membrane pass occupies residues 23–43 (FPWLLFALILLVFLTSIASNV). The Cytoplasmic segment spans residues 44–60 (VKIILIHIDSRLHTPMY). Residues 61 to 83 (FLLSQLSLRDILYISTIVPKMLV) traverse the membrane as a helical segment. Over 84 to 97 (DQVMSQRAISFAGC) the chain is Extracellular. Cys-97 and Cys-189 are oxidised to a cystine. Residues 98–118 (TAQHFLYLTLAGAEFFLLGLM) traverse the membrane as a helical segment. Residues 119-139 (SYDRYVAICNPLHYPVLMSRK) are Cytoplasmic-facing. A helical transmembrane segment spans residues 140–160 (ICWLIVAAAWLGGSIDGFLLT). Topologically, residues 161-197 (PVTMQFPFCASREINHFFCEVPALLKLSCTDTSAYET) are extracellular. Residues 198–218 (AMYVCCIMMLLIPFSVISGSY) traverse the membrane as a helical segment. Residues 219 to 244 (TRILITVYRMSEAEGRGKAVATCSSH) lie on the Cytoplasmic side of the membrane. Residues 245–265 (MVVVSLFYGAAMYTYVLPHSY) form a helical membrane-spanning segment. The Extracellular portion of the chain corresponds to 266–271 (HTPEQD). Residues 272 to 292 (KAVSAFYTILTPMLNPLIYSL) traverse the membrane as a helical segment. At 293–317 (RNKDVTGALQKVVGRCVSSGKVTTF) the chain is on the cytoplasmic side.

Belongs to the G-protein coupled receptor 1 family.

The protein resides in the cell membrane. Functionally, odorant receptor. The chain is Olfactory receptor 2T27 (OR2T27) from Homo sapiens (Human).